The primary structure comprises 114 residues: Probable acid stress chaperone HdeA (114 aa).

Residues 1–26 (MIKALFNKNTALAAVTILALSGGAMA) form the signal peptide. An intrachain disulfide couples Cys46 to Cys94.

The protein belongs to the HdeA family.

Its subcellular location is the periplasm. Its function is as follows. Required for optimal acid stress protection. Exhibits a chaperone-like activity only at low pH by suppressing non-specifically the aggregation of denaturated periplasmic proteins. The chain is Probable acid stress chaperone HdeA from Brucella suis biovar 1 (strain 1330).